The following is a 275-amino-acid chain: Large ribosomal subunit protein uL2 (275 aa).

Residues 224-275 (AMNPVDHPHGGGEGKAPIGHPGPLTPWGKPALGYKTRKKGKASDKFIVKRRK) form a disordered region. Basic and acidic residues predominate over residues 264–275 (KASDKFIVKRRK).

Belongs to the universal ribosomal protein uL2 family. Part of the 50S ribosomal subunit. Forms a bridge to the 30S subunit in the 70S ribosome.

In terms of biological role, one of the primary rRNA binding proteins. Required for association of the 30S and 50S subunits to form the 70S ribosome, for tRNA binding and peptide bond formation. It has been suggested to have peptidyltransferase activity; this is somewhat controversial. Makes several contacts with the 16S rRNA in the 70S ribosome. This chain is Large ribosomal subunit protein uL2, found in Caldanaerobacter subterraneus subsp. tengcongensis (strain DSM 15242 / JCM 11007 / NBRC 100824 / MB4) (Thermoanaerobacter tengcongensis).